The primary structure comprises 182 residues: Oligoribonuclease (182 aa).

The 164-residue stretch at 8 to 171 folds into the Exonuclease domain; sequence LIWIDLEMTG…DDIRESIKEL (164 aa). Tyr-129 is a catalytic residue.

This sequence belongs to the oligoribonuclease family.

It is found in the cytoplasm. Functionally, 3'-to-5' exoribonuclease specific for small oligoribonucleotides. This is Oligoribonuclease from Haemophilus influenzae (strain PittGG).